The chain runs to 263 residues: Non-functional protein STAY-GREEN, chloroplastic (263 aa).

The transit peptide at Met-1 to Glu-54 directs the protein to the chloroplast.

Belongs to the staygreen family.

The protein localises to the plastid. Its subcellular location is the chloroplast. Its function is as follows. Non-functional protein probably interfering with the disassembling mechanism of the intact light-harvesting complex of photosystem II (LHCII) in the thylakoid membranes. Responsible for a stay-green phenotype. This Pisum sativum (Garden pea) protein is Non-functional protein STAY-GREEN, chloroplastic (SGR).